Here is a 466-residue protein sequence, read N- to C-terminus: A-type ATP synthase subunit B 2 (466 aa).

It belongs to the ATPase alpha/beta chains family. As to quaternary structure, has multiple subunits with at least A(3), B(3), C, D, E, F, H, I and proteolipid K(x).

It localises to the cell membrane. Component of the A-type ATP synthase that produces ATP from ADP in the presence of a proton gradient across the membrane. The B chain is a regulatory subunit. In Methanospirillum hungatei JF-1 (strain ATCC 27890 / DSM 864 / NBRC 100397 / JF-1), this protein is A-type ATP synthase subunit B 2.